We begin with the raw amino-acid sequence, 454 residues long: Neuronal acetylcholine receptor subunit alpha-5 (454 aa).

Positions 1–26 are disordered; it reads MPLRARSRKPGAGPAARAPQAGVSEP. Positions 1-29 are cleaved as a signal peptide; sequence MPLRARSRKPGAGPAARAPQAGVSEPSFV. A compositionally biased stretch (low complexity) spans 10–22; that stretch reads PGAGPAARAPQAG. Over 30–240 the chain is Extracellular; the sequence is AKSEDRLFKH…IIRRLPLFYT (211 aa). N55, N169, and N215 each carry an N-linked (GlcNAc...) asparagine glycan. C156 and C170 are disulfide-bonded. An intrachain disulfide couples C220 to C221. Helical transmembrane passes span 241-261, 270-290, and 303-323; these read LFLI…FYLP, LCTS…EIIP, and LVFT…AINI. The Cytoplasmic portion of the chain corresponds to 324–416; that stretch reads HHRSSSTHNA…KFIAQVLDRM (93 aa). Residues 417–437 form a helical membrane-spanning segment; sequence FLWAFLLVSIIGSLVLFIPVI. The Extracellular segment spans residues 438–454; it reads HKWASIIVPVHIGSTNT.

It belongs to the ligand-gated ion channel (TC 1.A.9) family. Acetylcholine receptor (TC 1.A.9.1) subfamily. Alpha-5/CHRNA5 sub-subfamily. As to quaternary structure, neuronal AChR that forms heteropentamers composed of two different type of subunits: alpha and non-alpha (beta). CHRNA5/alpha-5 subunit is only able to form functional nAChRs when co-assembled with another alpha subunit, can be combined to CHRNA4/alpha-4 or CHRNA3/alpha-3 and CHRNB4/beta-4 or CHRNB2/beta-2 to give rise to functional receptors. Interacts with LYPD6.

The protein resides in the synaptic cell membrane. Its subcellular location is the cell membrane. It carries out the reaction Ca(2+)(in) = Ca(2+)(out). It catalyses the reaction K(+)(in) = K(+)(out). The enzyme catalyses Na(+)(in) = Na(+)(out). Activated by a myriad of ligands such as acetylcholine, cytisine, nicotine, choline and epibatidine. Component of neuronal acetylcholine receptors (nAChRs) that function as pentameric, ligand-gated cation channels with high calcium permeability among other activities. nAChRs are excitatory neurotrasnmitter receptors formed by a collection of nAChR subunits known to mediate synaptic transmission in the nervous system and the neuromuscular junction. Each nAchR subunit confers differential attributes to channel properties, including activation, deactivation and desensitization kinetics, pH sensitivity, cation permeability, and binding to allosteric modulators. Has an accessory rather than functional role and is only able to form functional nAChRs when co-assembled with another beta subunit. Participates in pentameric assemblies along with CHRNA3, CHRNA4, CHRNB2 and CHRNB4. Increases receptor sensitivity to acetylcholine and nicotine when associated with CHRNA4 and CHRNB2. Plays a role in nicotine addiction. This is Neuronal acetylcholine receptor subunit alpha-5 (CHRNA5) from Gallus gallus (Chicken).